A 264-amino-acid chain; its full sequence is Glutamate racemase (264 aa).

Residues 10–11 (DS) and 42–43 (YG) contribute to the substrate site. The Proton donor/acceptor role is filled by Cys-73. Substrate is bound at residue 74–75 (NT). Cys-183 functions as the Proton donor/acceptor in the catalytic mechanism. 184–185 (TH) provides a ligand contact to substrate.

It belongs to the aspartate/glutamate racemases family.

The catalysed reaction is L-glutamate = D-glutamate. Its pathway is cell wall biogenesis; peptidoglycan biosynthesis. In terms of biological role, provides the (R)-glutamate required for cell wall biosynthesis. This Streptococcus pyogenes serotype M2 (strain MGAS10270) protein is Glutamate racemase.